Consider the following 180-residue polypeptide: Diphosphoinositol polyphosphate phosphohydrolase 2 (180 aa).

An N-acetylmethionine modification is found at methionine 1. Residues arginine 10, 18 to 20 (KKR), and 39 to 41 (SSR) contribute to the substrate site. The Nudix hydrolase domain occupies 18 to 144 (KKRAACLCFR…VHAEYLEKLK (127 aa)). Residues glycine 50 and glutamate 66 each contribute to the Mg(2+) site. Positions 51–72 (GGMEPEEEPGGAAVREVYEEAG) match the Nudix box motif. Glutamate 69 serves as the catalytic Proton acceptor. Position 70 (glutamate 70) interacts with Mg(2+). Substrate contacts are provided by residues 89 to 91 (RKH), arginine 115, and lysine 133.

Belongs to the Nudix hydrolase family. DIPP subfamily. Requires Mg(2+) as cofactor. It depends on Mn(2+) as a cofactor. As to expression, expressed in heart and, at lower level in skeletal muscle, pancreas and kidney.

The protein resides in the cytoplasm. It carries out the reaction diphospho-myo-inositol polyphosphate + H2O = myo-inositol polyphosphate + phosphate.. The enzyme catalyses 5-diphospho-1D-myo-inositol 1,2,3,4,6-pentakisphosphate + H2O = 1D-myo-inositol hexakisphosphate + phosphate + H(+). The catalysed reaction is 3,5-bis(diphospho)-1D-myo-inositol 1,2,4,6-tetrakisphosphate + H2O = 3-diphospho-1D-myo-inositol 1,2,4,5,6-pentakisphosphate + phosphate + 2 H(+). It catalyses the reaction 5-diphospho-1D-myo-inositol 1,3,4,6-tetrakisphosphate + H2O = 1D-myo-inositol 1,3,4,5,6-pentakisphosphate + phosphate + H(+). It carries out the reaction P(1),P(6)-bis(5'-adenosyl) hexaphosphate + H2O = 2 ATP + 2 H(+). The enzyme catalyses P(1),P(5)-bis(5'-adenosyl) pentaphosphate + H2O = ADP + ATP + 2 H(+). The catalysed reaction is 5-phospho-alpha-D-ribose 1-diphosphate + H2O = alpha-D-ribose 1,5-bisphosphate + phosphate + H(+). In terms of biological role, cleaves the beta-phosphate from diphosphoinositol polyphosphates such as PP-InsP5 (diphosphoinositol pentakisphosphate), PP-InsP4 (diphosphoinositol tetrakisphosphate) and [PP]2-InsP4 (bisdiphosphoinositol tetrakisphosphate), suggesting that it may play a role in signal transduction. Diadenosine polyphosphates, particularly Ap6A (P(1),P(6)-bis(5a-adenosyl) hexaphosphate) and Ap5A (P(1),P(5)-bis(5'-adenosyl) pentaphosphate) are downstream effectors of a signaling cascade that regulates cardiac KATP channels, can also be substrates, although with lower preference than the diphosphoinositol polyphosphates. Can also catalyze the hydrolysis of 5-phosphoribose 1-diphosphate, generating the glycolytic activator ribose 1,5-bisphosphate. Does not play a role in U8 snoRNA decapping activity. Binds U8 snoRNA. The polypeptide is Diphosphoinositol polyphosphate phosphohydrolase 2 (Homo sapiens (Human)).